A 187-amino-acid polypeptide reads, in one-letter code: MARHIIILVAVFWFATAEASHCSINGLPLVRNISELPQENYGRSGLSHTTIAGSVLHGMKEIEVWLQTFAPGFRTPIHRHSCEEIFIVLKGQGTLYLTPSSHSKYPGNPQEFHIFPNSTFHIPVNDVHQVWNTGEQEDLQVLDVISRPPVKVFMYDDWSMPHTAAKLKFPYYWDEECYQTTSRKDEL.

Positions 1-20 (MARHIIILVAVFWFATAEAS) are cleaved as a signal peptide. Cysteine 22 and cysteine 177 are oxidised to a cystine. Residues histidine 78, histidine 80, and glutamate 84 each contribute to the Zn(2+) site. Asparagine 117 is a glycosylation site (N-linked (GlcNAc...) asparagine). Histidine 128 contacts Zn(2+). The Prevents secretion from ER motif lies at 184 to 187 (KDEL).

In terms of assembly, homodimer.

It is found in the endoplasmic reticulum lumen. Functionally, this is probably a receptor for the plant hormone auxin. The polypeptide is Auxin-binding protein T92 (T92) (Nicotiana tabacum (Common tobacco)).